The following is a 383-amino-acid chain: MGAGGRMQDPTNGGNKTEPEPIQRVPHEKPPFTVGDIKKAIPPHCFNRSVIRSFSYVFYDLTIASILYYIANNYISTLPSPLAYVAWPVYWAVQGCVLTGVWVIAHECGHHAFSDHQWLDDTVGLVLHSFLLVPYFSWKYSHRRHHSNTGSIEHDEVFVPKLKSGVRSTARYLNNPPGRILTLLVTLTLGWPLYLTFNVSGRYYDRFACHFDPNSPIYSKRERAQIFISDAGILAVVFVLFRLAMTKGLTWVLTMYGGPLLVVNGFLVLITFLQHTHPSLPHYDSTEWDWLRGALTTIDRDYGILNKVFHNITDTHVAHHLFSTMPHYHAMEATKVIKPILGDYYQFDGTSIFKAMYRETKECIYVDKDEEVKDGVYWYRNKI.

The segment at Met1 to Lys29 is disordered. The span at Thr17–Lys29 shows a compositional bias: basic and acidic residues. 2 consecutive transmembrane segments (helical) span residues Val50 to Ile70 and Val85 to Ala105. A Histidine box-1 motif is present at residues His106–His110. Residues Trp118–Trp138 form a helical membrane-spanning segment. A Histidine box-2 motif is present at residues His142 to His146. The next 3 helical transmembrane spans lie at Ile180–Ser200, Ile226–Thr246, and Val252–Phe272. Residues His316–His320 carry the Histidine box-3 motif.

The protein belongs to the fatty acid desaturase type 1 family. As to expression, expressed in leaves, flower buds and developing seeds.

The protein localises to the membrane. The protein operates within lipid metabolism; polyunsaturated fatty acid biosynthesis. Its function is as follows. Catalyzes the desaturation of oleic acid to linoleic acid. Introduces a double bond at position 12 of 16:1(9Z) and 18:1(9Z). This Calendula officinalis (Pot marigold) protein is Delta(12) fatty acid desaturase FAD2.